A 104-amino-acid polypeptide reads, in one-letter code: Iron-sulfur cluster assembly protein CyaY (104 aa).

The protein belongs to the frataxin family.

Its function is as follows. Involved in iron-sulfur (Fe-S) cluster assembly. May act as a regulator of Fe-S biogenesis. In Aeromonas salmonicida (strain A449), this protein is Iron-sulfur cluster assembly protein CyaY.